A 28-amino-acid chain; its full sequence is Ranatuerin-2SEc (28 aa).

Cys-23 and Cys-28 are disulfide-bonded.

In terms of tissue distribution, expressed by the skin glands.

The protein resides in the secreted. Mast cell degranulating peptide. Causes histamine release from rat peritoneal mast cells in vitro. Has antibacterial activity against the Gram-negative bacterium E.coli K12 and Gram-positive bacterium M.luteus NCT C2665. The polypeptide is Ranatuerin-2SEc (Lithobates sevosus (Dusky gopher frog)).